The following is a 297-amino-acid chain: Glycerol-3-phosphate dehydrogenase [NAD(P)+] (297 aa).

NADPH is bound by residues tryptophan 11, arginine 33, and lysine 79. Positions 79, 107, and 109 each coordinate sn-glycerol 3-phosphate. Alanine 111 is a binding site for NADPH. The sn-glycerol 3-phosphate site is built by lysine 161, aspartate 214, serine 224, arginine 225, and asparagine 226. Lysine 161 functions as the Proton acceptor in the catalytic mechanism. Residue arginine 225 coordinates NADPH. NADPH is bound by residues valine 249 and glutamate 251.

The protein belongs to the NAD-dependent glycerol-3-phosphate dehydrogenase family.

It localises to the cytoplasm. The catalysed reaction is sn-glycerol 3-phosphate + NAD(+) = dihydroxyacetone phosphate + NADH + H(+). The enzyme catalyses sn-glycerol 3-phosphate + NADP(+) = dihydroxyacetone phosphate + NADPH + H(+). The protein operates within membrane lipid metabolism; glycerophospholipid metabolism. Catalyzes the reduction of the glycolytic intermediate dihydroxyacetone phosphate (DHAP) to sn-glycerol 3-phosphate (G3P), the key precursor for phospholipid synthesis. This Campylobacter jejuni subsp. jejuni serotype O:6 (strain 81116 / NCTC 11828) protein is Glycerol-3-phosphate dehydrogenase [NAD(P)+].